The sequence spans 90 residues: UPF0223 protein lwe1035 (90 aa).

Belongs to the UPF0223 family.

This is UPF0223 protein lwe1035 from Listeria welshimeri serovar 6b (strain ATCC 35897 / DSM 20650 / CCUG 15529 / CIP 8149 / NCTC 11857 / SLCC 5334 / V8).